The primary structure comprises 860 residues: Alanine--tRNA ligase (860 aa).

Zn(2+)-binding residues include H563, H567, C665, and H669.

It belongs to the class-II aminoacyl-tRNA synthetase family. Requires Zn(2+) as cofactor.

Its subcellular location is the cytoplasm. The enzyme catalyses tRNA(Ala) + L-alanine + ATP = L-alanyl-tRNA(Ala) + AMP + diphosphate. Catalyzes the attachment of alanine to tRNA(Ala) in a two-step reaction: alanine is first activated by ATP to form Ala-AMP and then transferred to the acceptor end of tRNA(Ala). Also edits incorrectly charged Ser-tRNA(Ala) and Gly-tRNA(Ala) via its editing domain. This chain is Alanine--tRNA ligase, found in Vibrio parahaemolyticus serotype O3:K6 (strain RIMD 2210633).